Here is a 490-residue protein sequence, read N- to C-terminus: Velvet complex subunit 2 (490 aa).

2 disordered regions span residues 23–148 (LYHH…ESQQ) and 295–316 (YQTQPTYSQGSSAYPSNGTYGP). Basic residues predominate over residues 54–70 (PPSHHFQLHPGHGHHQQ). Over residues 112-131 (AAEHRDHPQHALDEPSRSHD) the composition is skewed to basic and acidic residues. The Velvet domain maps to 164-474 (ATGRRYHLDV…AAQGIKIPIR (311 aa)). The segment covering 295–313 (YQTQPTYSQGSSAYPSNGT) has biased composition (polar residues).

Belongs to the velvet family. VelB subfamily. As to quaternary structure, component of the heterotrimeric velvet complex composed of LAE1, VEL1 and VEL2; VEL1 acting as a bridging protein between LAE1 and VEL2. Forms a heterodimeric complex with VOS1; the formation of the VEL2-VOS1 complex is light-dependent.

The protein resides in the nucleus. It is found in the cytoplasm. Its function is as follows. Component of the velvet transcription factor complex that controls sexual/asexual developmental ratio in response to light, promoting sexual development in the darkness while stimulating asexual sporulation under illumination. The velvet complex acts as a global regulator for secondary metabolite gene expression. Component of the VEL2-VOS1 heterodimeric complex that plays a dual role in activating genes associated with spore maturation and repressing certain development-associated genes. The VEL2-VOS1 complex binds DNA through the DNA-binding domain of VOS1 that recognizes an 11-nucleotide consensus sequence 5'-CTGGCCGCGGC-3' consisting of two motifs in the promoters of key developmental regulatory genes. Regulates expression of cellulase-encoding genes such as the cellobiohydrolase-encoding genes cbh1 and cbh2, the endo-beta-1,4-glucanase-encoding genes egl1 and egl2, and the beta-glucosidase-encoding gene bgl1. The protein is Velvet complex subunit 2 of Hypocrea jecorina (strain QM6a) (Trichoderma reesei).